A 328-amino-acid chain; its full sequence is Nicotianamine synthase 1 (328 aa).

The protein belongs to the nicotianamine synthase (NAS)-like family. In terms of tissue distribution, in roots but not in leaves.

It catalyses the reaction 3 S-adenosyl-L-methionine = nicotianamine + 3 S-methyl-5'-thioadenosine + 3 H(+). Functionally, synthesizes nicotianamine, a polyamine that is the first intermediate in the synthesis of the phytosiderophores of the mugineic acid type found in gramineae which serves as a sensor for the physiological iron status within the plant, and/or might be involved in the transport of iron. The protein is Nicotianamine synthase 1 (NAS1) of Hordeum vulgare (Barley).